Reading from the N-terminus, the 370-residue chain is Aminomethyltransferase (370 aa).

The protein belongs to the GcvT family. In terms of assembly, the glycine cleavage system is composed of four proteins: P, T, L and H.

It catalyses the reaction N(6)-[(R)-S(8)-aminomethyldihydrolipoyl]-L-lysyl-[protein] + (6S)-5,6,7,8-tetrahydrofolate = N(6)-[(R)-dihydrolipoyl]-L-lysyl-[protein] + (6R)-5,10-methylene-5,6,7,8-tetrahydrofolate + NH4(+). In terms of biological role, the glycine cleavage system catalyzes the degradation of glycine. This Stenotrophomonas maltophilia (strain R551-3) protein is Aminomethyltransferase.